Reading from the N-terminus, the 922-residue chain is Metabotropic glutamate receptor 7 (922 aa).

Residues 1–34 (MVQLRKLLRVLTLMKFPCCVLEVLLCALAAAARG) form the signal peptide. At 35–590 (QEMYAPHSIR…IIKLEWHSPW (556 aa)) the chain is on the extracellular side. A disulfide bond links Cys-67 and Cys-109. The N-linked (GlcNAc...) asparagine glycan is linked to Asn-98. L-glutamate-binding positions include Ser-159, 180–182 (AST), Tyr-230, and Asp-314. Intrachain disulfides connect Cys-249–Cys-541, Cys-374–Cys-390, Cys-430–Cys-437, Cys-523–Cys-542, Cys-527–Cys-545, Cys-548–Cys-560, and Cys-563–Cys-576. Lys-407 contributes to the L-glutamate binding site. N-linked (GlcNAc...) asparagine glycosylation is found at Asn-458 and Asn-486. Residue Asn-572 is glycosylated (N-linked (GlcNAc...) asparagine). The chain crosses the membrane as a helical span at residues 591-615 (AVIPVFLAMLGIIATIFVMATFIRY). The Cytoplasmic portion of the chain corresponds to 616–627 (NDTPIVRASGRE). A helical transmembrane segment spans residues 628–648 (LSYVLLTGIFLCYIITFLMIA). At 649 to 654 (KPDVAV) the chain is on the extracellular side. A helical transmembrane segment spans residues 655-675 (CSFRRVFLGLGMCISYAALLT). Residues 676–702 (KTNRIYRIFEQGKKSVTAPRLISPTSQ) lie on the Cytoplasmic side of the membrane. The chain crosses the membrane as a helical span at residues 703–723 (LAITSSLISVQLLGVFIWFGV). Topologically, residues 724–753 (DPPNIIIDYDEHKTMNPEQARGVLKCDITD) are extracellular. A helical transmembrane segment spans residues 754-775 (LQIICSLGYSILLMVTCTVYAI). Residues 776-788 (KTRGVPENFNEAK) are Cytoplasmic-facing. The helical transmembrane segment at 789–810 (PIGFTMYTTCIVWLAFIPIFFG) threads the bilayer. The Extracellular portion of the chain corresponds to 811 to 825 (TAQSAEKLYIQTTTL). A helical transmembrane segment spans residues 826-850 (TISMNLSASVALGMLYMPKVYIIIF). The Cytoplasmic segment spans residues 851–922 (HPELNVQKRK…VTWYTIPPTV (72 aa)).

Belongs to the G-protein coupled receptor 3 family. Homodimer. Interacts with PICK1.

It localises to the cell membrane. G-protein coupled receptor activated by glutamate that regulates axon outgrowth through the MAPK-cAMP-PKA signaling pathway during neuronal development. Ligand binding causes a conformation change that triggers signaling via guanine nucleotide-binding proteins (G proteins) and modulates the activity of downstream effectors, such as adenylate cyclase that it inhibits. The sequence is that of Metabotropic glutamate receptor 7 (GRM7) from Pongo abelii (Sumatran orangutan).